The chain runs to 505 residues: ATP synthase subunit alpha (505 aa).

An ATP-binding site is contributed by 169–176 (GDRQTGKT).

The protein belongs to the ATPase alpha/beta chains family. As to quaternary structure, F-type ATPases have 2 components, CF(1) - the catalytic core - and CF(0) - the membrane proton channel. CF(1) has five subunits: alpha(3), beta(3), gamma(1), delta(1), epsilon(1). CF(0) has three main subunits: a(1), b(2) and c(9-12). The alpha and beta chains form an alternating ring which encloses part of the gamma chain. CF(1) is attached to CF(0) by a central stalk formed by the gamma and epsilon chains, while a peripheral stalk is formed by the delta and b chains.

It is found in the cell membrane. The catalysed reaction is ATP + H2O + 4 H(+)(in) = ADP + phosphate + 5 H(+)(out). Produces ATP from ADP in the presence of a proton gradient across the membrane. The alpha chain is a regulatory subunit. The polypeptide is ATP synthase subunit alpha (Alkaliphilus oremlandii (strain OhILAs) (Clostridium oremlandii (strain OhILAs))).